The primary structure comprises 37 residues: Large ribosomal subunit protein bL36 (37 aa).

This sequence belongs to the bacterial ribosomal protein bL36 family.

In Thermosynechococcus vestitus (strain NIES-2133 / IAM M-273 / BP-1), this protein is Large ribosomal subunit protein bL36.